Here is a 121-residue protein sequence, read N- to C-terminus: UPF0102 protein BVU_1879 (121 aa).

The protein belongs to the UPF0102 family.

The polypeptide is UPF0102 protein BVU_1879 (Phocaeicola vulgatus (strain ATCC 8482 / DSM 1447 / JCM 5826 / CCUG 4940 / NBRC 14291 / NCTC 11154) (Bacteroides vulgatus)).